The primary structure comprises 260 residues: 3'-5' ssDNA/RNA exonuclease TatD (260 aa).

A divalent metal cation is bound by residues glutamate 92, histidine 128, and histidine 153.

Belongs to the metallo-dependent hydrolases superfamily. TatD-type hydrolase family. TatD subfamily. Monomer. It depends on Mg(2+) as a cofactor.

It is found in the cytoplasm. Functionally, 3'-5' exonuclease that prefers single-stranded DNA and RNA. May play a role in the H(2)O(2)-induced DNA damage repair. The protein is 3'-5' ssDNA/RNA exonuclease TatD of Pantoea sp. (strain At-9b).